The following is an 840-amino-acid chain: MDRVLRDVFDYSYRDYILSWYGNLSRDDGQLYHLLLDDFWEIVKQIRQRLSHVDVVKVVCNDIVKALLTHFCDLKAATARHEEQPRPFVLHACLKDSHDEVRFLQTCSQVLVLCLLPSKDIQSLSLRTMLAEILTTKVLKPVVELLSNPDYINQMLLRQLEYREQMSEHHKRAYTYAPSYEDFIKLINSNSDVDFLKQLRYQIVVEIIQATTISSFPQLKRHKGKESAAMKTDLLRARNMKRYINQLTVAKKQCEKRIRILGGPAYDQQEDGASDEGEGPQSQKILQFEDIMTNPFYRERFGTYMERIDKRALVGFWESAEHLKNANKSEIPQLVSEMYQNFFVESKEISVEKSLYKEIQQCLVGNRGIEVFSKIQADVSEVLRERYYPSFLVSDLYEKLMREEEEEEPDAQLASEKDELGSGGEAGEEAVEGTSGVSDPASFAVIKLRELNEKLEYKRQALSSIQNAPKPDKKIISKLKDEILLIEKECTALQLHMARTDWWCENLGLWRASITSAEVTEENGEQMPCYFVRVNLQEVGGVETKNWTVPRRLSEFQNLHRKLSECVPSLKKVQLPSLSKLPFKSIDHKFLGKSRNQLNAFLQNLLSDERLFQSEALYAFLSPSPDYLKVIDVQGKKTSFSLSSFLEKLPRDFFSHQEEEIEEDSDLSDYGDDVDGKKDSLAEPCFMLIGEIFELRGMFKWVRRTLIALVQVTFGRTINKQIRDTVSWISSEQMLVYYISAFRDAFWPNGKLAPPTRIRSVAQSQETKQRAQQKLLENIPDTLQSLVGQQNARHGIIKIFKALQETKANKHLLYVLMELLLTELCPELRAHLDQFKAGQV.

The PXA domain maps to 1–164 (MDRVLRDVFD…MLLRQLEYRE (164 aa)). The RGS domain maps to 287–401 (QFEDIMTNPF…LVSDLYEKLM (115 aa)). The disordered stretch occupies residues 404–437 (EEEEEPDAQLASEKDELGSGGEAGEEAVEGTSGV). The stretch at 446–494 (IKLRELNEKLEYKRQALSSIQNAPKPDKKIISKLKDEILLIEKECTALQ) forms a coiled coil. One can recognise a PX domain in the interval 508–628 (GLWRASITSA…AFLSPSPDYL (121 aa)). At serine 665 the chain carries Phosphoserine.

The protein belongs to the sorting nexin family.

It is found in the endosome membrane. Functionally, may be involved in several stages of intracellular trafficking. The protein is Sorting nexin-25 (Snx25) of Mus musculus (Mouse).